The primary structure comprises 102 residues: ATP-dependent Clp protease adapter protein ClpS (102 aa).

It belongs to the ClpS family. In terms of assembly, binds to the N-terminal domain of the chaperone ClpA.

Involved in the modulation of the specificity of the ClpAP-mediated ATP-dependent protein degradation. In Janthinobacterium sp. (strain Marseille) (Minibacterium massiliensis), this protein is ATP-dependent Clp protease adapter protein ClpS.